We begin with the raw amino-acid sequence, 201 residues long: 3-isopropylmalate dehydratase small subunit (201 aa).

This sequence belongs to the LeuD family. LeuD type 1 subfamily. Heterodimer of LeuC and LeuD.

The catalysed reaction is (2R,3S)-3-isopropylmalate = (2S)-2-isopropylmalate. It participates in amino-acid biosynthesis; L-leucine biosynthesis; L-leucine from 3-methyl-2-oxobutanoate: step 2/4. Its function is as follows. Catalyzes the isomerization between 2-isopropylmalate and 3-isopropylmalate, via the formation of 2-isopropylmaleate. The chain is 3-isopropylmalate dehydratase small subunit from Enterobacter sp. (strain 638).